The primary structure comprises 464 residues: Protein FAM90A11 (464 aa).

Disordered stretches follow at residues 1–42 (MMAR…DPRL), 70–389 (PATL…HDGA), and 415–437 (HSPEKPGAFLAQSPHVSEKSEAP). 2 stretches are compositionally biased toward basic and acidic residues: residues 74–89 (GKKEGKENLKPWKPRV) and 97–114 (NKDKGEKEERPRQQDPQR). Over residues 180–197 (LASLSPLRKASLSSSSSL) the composition is skewed to low complexity. A compositionally biased stretch (polar residues) spans 341-356 (GPSTSPQMGRRTSAQV).

The protein belongs to the FAM90 family.

The chain is Protein FAM90A11 from Homo sapiens (Human).